Here is a 950-residue protein sequence, read N- to C-terminus: Glycine dehydrogenase (decarboxylating) (950 aa).

The residue at position 698 (lysine 698) is an N6-(pyridoxal phosphate)lysine.

This sequence belongs to the GcvP family. In terms of assembly, the glycine cleavage system is composed of four proteins: P, T, L and H. It depends on pyridoxal 5'-phosphate as a cofactor.

The enzyme catalyses N(6)-[(R)-lipoyl]-L-lysyl-[glycine-cleavage complex H protein] + glycine + H(+) = N(6)-[(R)-S(8)-aminomethyldihydrolipoyl]-L-lysyl-[glycine-cleavage complex H protein] + CO2. The glycine cleavage system catalyzes the degradation of glycine. The P protein binds the alpha-amino group of glycine through its pyridoxal phosphate cofactor; CO(2) is released and the remaining methylamine moiety is then transferred to the lipoamide cofactor of the H protein. This chain is Glycine dehydrogenase (decarboxylating), found in Neisseria meningitidis serogroup C (strain 053442).